Reading from the N-terminus, the 769-residue chain is PDZ domain-containing protein 4 (769 aa).

One can recognise a PDZ domain in the interval 130–214 (EVELYKSSHR…TNISLLVARP (85 aa)). The segment at 221 to 315 (RWKDSDRDDF…TNTPGSLRKF (95 aa)) is disordered. Residues 229–239 (DFLDDFGSENE) are compositionally biased toward acidic residues. Ser236 is subject to Phosphoserine. Basic and acidic residues predominate over residues 282–298 (RTDESTRNEESSEHDLL). Residues 389-419 (VNRNESLGHEMAMLEEELRHLEFKCRNILRA) adopt a coiled-coil conformation. Residues 445–579 (ASEPKKHELS…RHRGQGQEGE (135 aa)) form a disordered region. The span at 447-467 (EPKKHELSDISELPEKSDKDS) shows a compositional bias: basic and acidic residues. At Ser454 the chain carries Phosphoserine. Residues 468-479 (TSAYNTGESCRS) are compositionally biased toward polar residues. Over residues 530-547 (LSRDPEAGRRQHAEERGR) the composition is skewed to basic and acidic residues.

As to expression, brain-specific. Expressed in fetal and adult brain. Up-regulated in synovial carcinomas.

The protein resides in the cytoplasm. It is found in the cell cortex. This chain is PDZ domain-containing protein 4 (PDZD4), found in Homo sapiens (Human).